The primary structure comprises 427 residues: Histidine--tRNA ligase (427 aa).

It belongs to the class-II aminoacyl-tRNA synthetase family. Homodimer.

The protein resides in the cytoplasm. It carries out the reaction tRNA(His) + L-histidine + ATP = L-histidyl-tRNA(His) + AMP + diphosphate + H(+). The polypeptide is Histidine--tRNA ligase (Proteus mirabilis (strain HI4320)).